Consider the following 523-residue polypeptide: Sialate O-acetylesterase (523 aa).

A signal peptide spans 1 to 23 (MVAPGLVLGLVLPLILWADRSAG). N-linked (GlcNAc...) asparagine glycans are attached at residues asparagine 107, asparagine 138, asparagine 267, asparagine 290, asparagine 401, and asparagine 422.

The protein localises to the lysosome. The catalysed reaction is N-acetyl-9-O-acetylneuraminate + H2O = N-acetylneuraminate + acetate + H(+). The enzyme catalyses an Ac-O-9-sialoglycoconjugate + H2O = a sialoglycoconjugate + acetate + H(+). Functionally, catalyzes the removal of O-acetyl ester groups from position 9 of the free diacetylated sialate N-acetyl-9-O-acetylneuraminate (Neu5,9Ac2) in the cytosol and of the diacetylated sialate residues of sialylglycoconjugates in the lysosomes. Together with the sialate-O-acetyltransferase they regulate the balance of acetylated sialoglycoconjugates, key players in various processes such as cell-cell interactions, host-pathogen recognition, and tumor antigenicity. The protein is Sialate O-acetylesterase (SIAE) of Pongo abelii (Sumatran orangutan).